A 228-amino-acid polypeptide reads, in one-letter code: 7-cyano-7-deazaguanine synthase (228 aa).

ATP is bound at residue 8–18 (LSGGLDSTTCL). Zn(2+) contacts are provided by Cys-188, Cys-198, Cys-201, and Cys-204.

The protein belongs to the QueC family. Zn(2+) serves as cofactor.

The catalysed reaction is 7-carboxy-7-deazaguanine + NH4(+) + ATP = 7-cyano-7-deazaguanine + ADP + phosphate + H2O + H(+). It functions in the pathway purine metabolism; 7-cyano-7-deazaguanine biosynthesis. Functionally, catalyzes the ATP-dependent conversion of 7-carboxy-7-deazaguanine (CDG) to 7-cyano-7-deazaguanine (preQ(0)). The polypeptide is 7-cyano-7-deazaguanine synthase (Legionella pneumophila (strain Paris)).